A 198-amino-acid chain; its full sequence is Single-stranded DNA cytosine deaminase (198 aa).

The Bipartite nuclear localization signal motif lies at methionine 1–cysteine 30. Positions aspartate 2–glutamate 26 are interaction with SUPT6H. Residues glycine 23–leucine 129 enclose the CMP/dCMP-type deaminase domain. A Phosphothreonine; by PKA modification is found at threonine 27. The residue at position 38 (serine 38) is a Phosphoserine; by PKA. The segment at alanine 39 to phenylalanine 42 is important for interaction with CTNNBL1. Histidine 56 serves as a coordination point for Zn(2+). The active-site Proton donor is the glutamate 58. Cysteine 87 and cysteine 90 together coordinate Zn(2+). The segment at tyrosine 88–cysteine 116 is required for interaction with RNF126. A Nuclear export signal motif is present at residues leucine 183 to leucine 198.

This sequence belongs to the cytidine and deoxycytidylate deaminase family. As to quaternary structure, interacts with CTNNBL1; the interaction is important for the immunoglobulin switch activity of AICDA. Interacts (via its NLS) with KPNA1. Interacts with PKA/PRKACA and PRKAR1A/PKR1. Interacts with SUPT6H, TRIM28 and NCL. Directly interacts with MCM3AP; this interaction may favor AICDA recruitment to immunoglobulin variable region genes, hence promoting somatic hypermutations. Zn(2+) is required as a cofactor. In terms of processing, ser-38 is the major site whereas Thr-27 is the minor site of phosphorylation. Phosphorylation regulates its class-switch recombination activity. Probably monoubiquitinated on several residues by RNF126. Expressed in thymus, lung, spleen, kidney, small intestine, lymph node and tonsil.

It localises to the nucleus. Its subcellular location is the cytoplasm. It catalyses the reaction a 2'-deoxycytidine in single-stranded DNA + H2O + H(+) = a 2'-deoxyuridine in single-stranded DNA + NH4(+). In terms of biological role, single-stranded DNA-specific cytidine deaminase. Involved in somatic hypermutation (SHM), gene conversion, and class-switch recombination (CSR) in B-lymphocytes by deaminating C to U during transcription of Ig-variable (V) and Ig-switch (S) region DNA. Required for several crucial steps of B-cell terminal differentiation necessary for efficient antibody responses. May also play a role in the epigenetic regulation of gene expression by participating in DNA demethylation. In Canis lupus familiaris (Dog), this protein is Single-stranded DNA cytosine deaminase (AICDA).